The following is a 96-amino-acid chain: Sec-independent protein translocase protein TatA (96 aa).

A helical membrane pass occupies residues 1–21; that stretch reads MGFSSIWHWIIVLVVVLLLFG. Residues 42 to 96 are disordered; the sequence is GMADDEDDEAASVSAERRGIEDGKPAQTIYPPQQPQQPQQPPQQPPVHRDDAPRG. Residues 56-65 are compositionally biased toward basic and acidic residues; that stretch reads AERRGIEDGK. Positions 73–86 are enriched in pro residues; it reads PQQPQQPQQPPQQP.

Belongs to the TatA/E family. The Tat system comprises two distinct complexes: a TatABC complex, containing multiple copies of TatA, TatB and TatC subunits, and a separate TatA complex, containing only TatA subunits. Substrates initially bind to the TatABC complex, which probably triggers association of the separate TatA complex to form the active translocon.

It localises to the cell inner membrane. Its function is as follows. Part of the twin-arginine translocation (Tat) system that transports large folded proteins containing a characteristic twin-arginine motif in their signal peptide across membranes. TatA could form the protein-conducting channel of the Tat system. The protein is Sec-independent protein translocase protein TatA of Rhodospirillum rubrum (strain ATCC 11170 / ATH 1.1.1 / DSM 467 / LMG 4362 / NCIMB 8255 / S1).